Reading from the N-terminus, the 414-residue chain is Voltage-gated ClC-type chloride channel ClcB (414 aa).

Helical transmembrane passes span 5-25, 54-74, 116-136, 147-167, 169-189, 220-240, 255-275, 292-312, 327-347, 353-373, and 381-401; these read LVISIMLGMVSALIVWLFHQA, ALTPALGGLAAGLLLWAYQRY, SAIGREGAMVLLAALFASVFA, LWVACGAAAGMASAYHAPLAG, LFIAEILFGTLMLASLGPVVI, VQYFLMALLGLMAGFSGPLFL, LLPPLQLALGGIIVGLLSLIF, TPPGVLLIGGILICKLLAVLA, LFVGAALGMLCGQIFSLWPVL, LLMALTGMATLLAATTHAPIM, and MTGEYTLLPGLLLSCVIATTI.

Belongs to the chloride channel (TC 2.A.49) family. ClcB subfamily.

The protein localises to the cell inner membrane. Its function is as follows. Probably acts as an electrical shunt for an outwardly-directed proton pump that is linked to amino acid decarboxylation, as part of the extreme acid resistance (XAR) response. The sequence is that of Voltage-gated ClC-type chloride channel ClcB from Yersinia pseudotuberculosis serotype O:1b (strain IP 31758).